Here is a 798-residue protein sequence, read N- to C-terminus: Sodium/hydrogen exchanger 4 (798 aa).

Residues 1-13 are Cytoplasmic-facing; the sequence is MALQMFVTYSPWN. Positions 14–28 form an intramembrane region, name=A/M1; sequence CLLLLVALECSEASS. Over 29 to 69 the chain is Cytoplasmic; the sequence is DLNESANSTAQYASNAWFAAASSEPEEGISVFELDYDYVQI. Residues 70-90 constitute an intramembrane region (name=B/M2); the sequence is PYEVTLWILLASLAKIGFHLY. Residues 91–94 lie on the Cytoplasmic side of the membrane; the sequence is HRLP. Residues 95-115 form a helical membrane-spanning segment; that stretch reads GLMPESCLLILVGALVGGIIF. The Extracellular segment spans residues 116–127; it reads GTDHKSPPVMDS. The chain crosses the membrane as a helical span at residues 128–148; it reads SIYFLYLLPPIVLEGGYFMPT. Topologically, residues 149–154 are cytoplasmic; it reads RPFFEN. A helical membrane pass occupies residues 155–175; the sequence is IGSILWWAVLGALINALGIGL. The Extracellular segment spans residues 176–196; the sequence is SLYLICQVKAFGLGDVNLLQN. The chain crosses the membrane as a helical span at residues 197 to 217; it reads LLFGSLISAVDPVAVLAVFEE. Topologically, residues 218-226 are cytoplasmic; the sequence is ARVNEQLYM. Residues 227-247 traverse the membrane as a helical segment; it reads MIFGEALLNDGITVVLYNMLI. The Extracellular portion of the chain corresponds to 248-270; it reads AFTKMHKFEDIETVDILAGCARF. The chain crosses the membrane as a helical span at residues 271–291; sequence IVVGLGGVLFGIVFGFISAFI. The Cytoplasmic segment spans residues 292–304; that stretch reads TRFTQNISAIEPL. Residues 305 to 325 traverse the membrane as a helical segment; sequence IVFMFSYLSYLAAETLYLSGI. Residues 326 to 356 lie on the Extracellular side of the membrane; sequence LAITACAVTMKKYVEENVSQTSYTTIKYFMK. N-linked (GlcNAc...) asparagine glycosylation occurs at N342. A helical membrane pass occupies residues 357 to 373; that stretch reads MLSSVSETLIFIFMGVS. The Cytoplasmic segment spans residues 374-384; that stretch reads TVGKNHEWNWA. The chain crosses the membrane as a helical span at residues 385 to 405; that stretch reads FICFTLAFCQIWRAISVFALF. At 406–420 the chain is on the extracellular side; the sequence is YISNQFRTFPFSIKD. Positions 421-441 form an intramembrane region, name=L; that stretch reads QCIIFYSGVRGAGSFSLAFLL. At 442-450 the chain is on the extracellular side; sequence PLSLFPRKK. A helical transmembrane segment spans residues 451–471; the sequence is MFVTATLVVIYFTVFIQGITV. Over 472-798 the chain is Cytoplasmic; the sequence is GPLVRYLDVK…RSHSPLLQKK (327 aa). Disordered stretches follow at residues 662–690 and 776–798; these read PYGN…GSPS and RWTA…LQKK. Residues 784–798 are compositionally biased toward basic residues; sequence GRDHHRSHSPLLQKK.

The protein belongs to the monovalent cation:proton antiporter 1 (CPA1) transporter (TC 2.A.36) family. As to quaternary structure, homodimer; each protomer has one site for sodium and one site for proton binding. Interacts with CHP1 and CHP2. Post-translationally, may be phosphorylated.

It localises to the basolateral cell membrane. It is found in the apical cell membrane. Its subcellular location is the zymogen granule membrane. The catalysed reaction is Na(+)(in) + H(+)(out) = Na(+)(out) + H(+)(in). It catalyses the reaction Na(+)(out) + NH4(+)(in) = Na(+)(in) + NH4(+)(out). Functionally, electroneutral antiporter that exchanges sodium for protons or ammonium ions at the basolateral membrane of epithelia to regulate cell volume and intracellular pH upon hypertonic conditions. As part of transcellular ammonia transport in renal tubules, mediates basolateral ammonium extrusion in the medullary thick ascending limb, regulating the corticopapillary ammonium gradient and overall renal acid excretion. Mediates sodium:proton exchange in gastric parietal cells secondary to cAMP-dependent acid secretion and hyperosmolarity. Possibly coupled to chloride:bicarbonate antiporter, enables loading of parietal cells with sodium and chloride ions to maintain cell volume and normal gastric acid secretion. Functions as a sodium sensor in neurons of organum vasculosum of the lamina terminalis where it regulates water intake in response to increased sodium concentration in body fluids. The sequence is that of Sodium/hydrogen exchanger 4 (SLC9A4) from Homo sapiens (Human).